The primary structure comprises 150 residues: Histone deacetylase complex subunit SAP18 (150 aa).

Belongs to the SAP18 family. Forms a complex with SIN3 and histone deacetylase. Interacts with the N-terminal residues of TRL. Interacts with BCD; in vitro and yeast cells.

The protein localises to the nucleus. Its subcellular location is the cytoplasm. In terms of biological role, involved in the tethering of the SIN3 complex to core histone proteins. Interacts with bicoid (bcd) to repress transcription of bicoid target genes in the anterior tip of the embryo; a process known as retraction. Interacts with Trl and binds to Polycomb response elements at the bithorax complex. May contribute to the regulation of other homeotic gene expressions. This Drosophila melanogaster (Fruit fly) protein is Histone deacetylase complex subunit SAP18 (Bin1).